Here is an 88-residue protein sequence, read N- to C-terminus: Small ribosomal subunit protein uS17 (88 aa).

It belongs to the universal ribosomal protein uS17 family. In terms of assembly, part of the 30S ribosomal subunit.

One of the primary rRNA binding proteins, it binds specifically to the 5'-end of 16S ribosomal RNA. The sequence is that of Small ribosomal subunit protein uS17 from Prochlorococcus marinus subsp. pastoris (strain CCMP1986 / NIES-2087 / MED4).